A 457-amino-acid chain; its full sequence is Glutamate--tRNA ligase 2 (457 aa).

The short motif at 9 to 19 (PSPTGRIHIGN) is the 'HIGH' region element. Positions 250–254 (GLSKR) match the 'KMSKS' region motif. ATP is bound at residue Lys253.

It belongs to the class-I aminoacyl-tRNA synthetase family. Glutamate--tRNA ligase type 1 subfamily. In terms of assembly, monomer.

The protein resides in the cytoplasm. It carries out the reaction tRNA(Glu) + L-glutamate + ATP = L-glutamyl-tRNA(Glu) + AMP + diphosphate. Its function is as follows. Catalyzes the attachment of glutamate to tRNA(Glu) in a two-step reaction: glutamate is first activated by ATP to form Glu-AMP and then transferred to the acceptor end of tRNA(Glu). The polypeptide is Glutamate--tRNA ligase 2 (Mesorhizobium japonicum (strain LMG 29417 / CECT 9101 / MAFF 303099) (Mesorhizobium loti (strain MAFF 303099))).